We begin with the raw amino-acid sequence, 297 residues long: Bilin biosynthesis protein MpeU (297 aa).

The protein belongs to the CpcE/RpcE/PecE family.

Its function is as follows. An enzyme involved in the biosynthesis of bilin. The polypeptide is Bilin biosynthesis protein MpeU (mpeU) (Synechococcus sp. (strain WH8020)).